Consider the following 172-residue polypeptide: Mitochondrial import inner membrane translocase subunit Tim17-B (172 aa).

C9 and C78 are disulfide-bonded. 3 helical membrane passes run 17 to 37 (CGGA…IKGF), 61 to 77 (QIGG…STID), and 113 to 133 (VGSA…GILL). Residues 147–172 (FLEDPSQLTPKEGSPAPGYPNYQQYH) form a disordered region.

The protein belongs to the Tim17/Tim22/Tim23 family. Component of the TIM23 complex at least composed of TIMM23, TIMM17 (TIMM17A or TIMM17B) and TIMM50. The complex interacts with the TIMM44 component of the PAM complex. The complex also interacts with DNAJC15.

The protein resides in the mitochondrion inner membrane. In terms of biological role, essential component of the TIM23 complex, a complex that mediates the translocation of transit peptide-containing proteins across the mitochondrial inner membrane. This is Mitochondrial import inner membrane translocase subunit Tim17-B (Timm17b) from Mus musculus (Mouse).